A 212-amino-acid polypeptide reads, in one-letter code: Probable U3 small nucleolar RNA-associated protein 11 (212 aa).

The protein belongs to the UTP11 family. Component of the ribosomal small subunit (SSU) processome.

It localises to the nucleus. It is found in the nucleolus. Involved in nucleolar processing of pre-18S ribosomal RNA. This chain is Probable U3 small nucleolar RNA-associated protein 11, found in Plasmodium falciparum (isolate 3D7).